Here is a 485-residue protein sequence, read N- to C-terminus: Adenosylhomocysteinase (485 aa).

Positions 60, 146, and 208 each coordinate substrate. Residue 209–211 coordinates NAD(+); it reads TTT. 2 residues coordinate substrate: Lys-238 and Asp-242. NAD(+)-binding positions include Asn-243, 272–277, Glu-295, Asn-330, 351–353, and Asn-399; these read GYGDVG and IGH.

The protein belongs to the adenosylhomocysteinase family. Requires NAD(+) as cofactor.

Its subcellular location is the cytoplasm. The enzyme catalyses S-adenosyl-L-homocysteine + H2O = L-homocysteine + adenosine. It participates in amino-acid biosynthesis; L-homocysteine biosynthesis; L-homocysteine from S-adenosyl-L-homocysteine: step 1/1. In terms of biological role, may play a key role in the regulation of the intracellular concentration of adenosylhomocysteine. The polypeptide is Adenosylhomocysteinase (Streptomyces griseus subsp. griseus (strain JCM 4626 / CBS 651.72 / NBRC 13350 / KCC S-0626 / ISP 5235)).